The sequence spans 123 residues: 1,4-dihydroxy-2-naphthoyl-CoA hydrolase (123 aa).

The active-site Nucleophile or proton acceptor is the E46.

Belongs to the thioesterase PaaI family.

The catalysed reaction is 1,4-dihydroxy-2-naphthoyl-CoA + H2O = 1,4-dihydroxy-2-naphthoate + CoA + H(+). Its pathway is quinol/quinone metabolism; menaquinone biosynthesis. In terms of biological role, catalyzes the hydrolysis of 1,4-dihydroxy-2-naphthoyl-CoA (DHNA-CoA) to 1,4-dihydroxy-2-naphthoate (DHNA) and free coenzyme A. Production of DHNA is required for protection against bacteriolysis in the cytosol of macrophages and tissue-specific virulence in vivo, suggesting that MenI is required to protect the bacteria from killing in the macrophage cytosol. In Listeria monocytogenes serotype 1/2a (strain 10403S), this protein is 1,4-dihydroxy-2-naphthoyl-CoA hydrolase.